The sequence spans 443 residues: Ribulose bisphosphate carboxylase large chain (443 aa).

The residue at position 7 (Lys-7) is an N6,N6,N6-trimethyllysine. Positions 116 and 166 each coordinate substrate. Lys-168 serves as the catalytic Proton acceptor. Lys-170 is a binding site for substrate. Mg(2+) contacts are provided by Lys-194, Asp-196, and Glu-197. At Lys-194 the chain carries N6-carboxylysine. His-287 acts as the Proton acceptor in catalysis. Substrate-binding residues include Arg-288, His-320, and Ser-372.

It belongs to the RuBisCO large chain family. Type I subfamily. In terms of assembly, heterohexadecamer of 8 large chains and 8 small chains; disulfide-linked. The disulfide link is formed within the large subunit homodimers. Mg(2+) is required as a cofactor. Post-translationally, the disulfide bond which can form in the large chain dimeric partners within the hexadecamer appears to be associated with oxidative stress and protein turnover.

It is found in the plastid. Its subcellular location is the chloroplast. It carries out the reaction 2 (2R)-3-phosphoglycerate + 2 H(+) = D-ribulose 1,5-bisphosphate + CO2 + H2O. It catalyses the reaction D-ribulose 1,5-bisphosphate + O2 = 2-phosphoglycolate + (2R)-3-phosphoglycerate + 2 H(+). Its function is as follows. RuBisCO catalyzes two reactions: the carboxylation of D-ribulose 1,5-bisphosphate, the primary event in carbon dioxide fixation, as well as the oxidative fragmentation of the pentose substrate in the photorespiration process. Both reactions occur simultaneously and in competition at the same active site. In Abies homolepis (Nikko fir), this protein is Ribulose bisphosphate carboxylase large chain.